The following is a 119-amino-acid chain: Promotilin (119 aa).

A signal peptide spans 1 to 25 (MVSRKAVVVLLVVHAAAMLASHTEA). Residues 40–72 (EKERNKGQKKSLSVQQASEELGPLDPSEPTKEE) are disordered.

Belongs to the motilin family.

It is found in the secreted. Its function is as follows. Plays an important role in the regulation of interdigestive gastrointestinal motility and indirectly causes rhythmic contraction of duodenal and colonic smooth muscle. The protein is Promotilin (MLN) of Sus scrofa (Pig).